Here is a 91-residue protein sequence, read N- to C-terminus: MKLTCVMIVAVLFLTAWTFVTADDPRDGPDTAVGWRKLFSEARDEMKNREASKLNERGCIEDKKYCGILPFANSGVCCSYLCIFVCVPKAP.

The signal sequence occupies residues 1–22 (MKLTCVMIVAVLFLTAWTFVTA). Residues 23–57 (DDPRDGPDTAVGWRKLFSEARDEMKNREASKLNER) constitute a propeptide that is removed on maturation. 3 cysteine pairs are disulfide-bonded: cysteine 59–cysteine 78, cysteine 66–cysteine 82, and cysteine 77–cysteine 86.

Belongs to the conotoxin O1 superfamily. In terms of tissue distribution, expressed by the venom duct.

The protein resides in the secreted. In Conus ventricosus (Mediterranean cone), this protein is Conotoxin VnMKLT1-021.